The sequence spans 431 residues: MQLNSNGWHVDDHIVVAVSTGIDSMCLLYQLLNDYKDSYRKLTCLHVNHGVRSASIEEARFLEVYCERHHIDLHIKKLDLSHSLDRNNSIQNEARIKRYEWFDEMMNVLEADVLLTAHHLDDQLETIMYRIFNGKSTRNKLGFDELSKRKGYQIYRPLLAVSKKEIKQFQERYHIPYFEDESNKDNKYVRNDIRNRIIPAIDENNQLKASHLLKLKQWHDEQYDILQYSAKQFIQEFVKFDEQSKYLEVSRQAFNNLPNSLKMVVLDCLLSKYYELFNISAKTYEEWFKQFSSKKAQFSINLTDKWIIQIAYGKLIIMAKNNGDTYFRVQTIEKPGNYIFNKYRLEIHSNLPKCLFPLTVRTRQSGDTFKLNGRDGYKKVNRLFIDCKVQQWVRDQMPIVLDKQQRIIAVGDLYQQQTIKQWIIISKNGDE.

Residue Ser-19–Ser-24 participates in ATP binding.

It belongs to the tRNA(Ile)-lysidine synthase family.

The protein resides in the cytoplasm. The catalysed reaction is cytidine(34) in tRNA(Ile2) + L-lysine + ATP = lysidine(34) in tRNA(Ile2) + AMP + diphosphate + H(+). Its function is as follows. Ligates lysine onto the cytidine present at position 34 of the AUA codon-specific tRNA(Ile) that contains the anticodon CAU, in an ATP-dependent manner. Cytidine is converted to lysidine, thus changing the amino acid specificity of the tRNA from methionine to isoleucine. The polypeptide is tRNA(Ile)-lysidine synthase (Staphylococcus aureus (strain MW2)).